The chain runs to 62 residues: Photosystem II reaction center protein Z (62 aa).

Transmembrane regions (helical) follow at residues 8–28 (AVFALIATSSILLISVPVVFA) and 41–61 (FSGTSLWIGLVFLVGILNSLI).

It belongs to the PsbZ family. In terms of assembly, PSII is composed of 1 copy each of membrane proteins PsbA, PsbB, PsbC, PsbD, PsbE, PsbF, PsbH, PsbI, PsbJ, PsbK, PsbL, PsbM, PsbT, PsbY, PsbZ, Psb30/Ycf12, at least 3 peripheral proteins of the oxygen-evolving complex and a large number of cofactors. It forms dimeric complexes.

Its subcellular location is the plastid. It localises to the chloroplast thylakoid membrane. May control the interaction of photosystem II (PSII) cores with the light-harvesting antenna, regulates electron flow through the 2 photosystem reaction centers. PSII is a light-driven water plastoquinone oxidoreductase, using light energy to abstract electrons from H(2)O, generating a proton gradient subsequently used for ATP formation. The polypeptide is Photosystem II reaction center protein Z (Citrus sinensis (Sweet orange)).